Here is a 567-residue protein sequence, read N- to C-terminus: DNA ligase (567 aa).

An ATP-binding site is contributed by glutamate 246. The active-site N6-AMP-lysine intermediate is the lysine 248. 6 residues coordinate ATP: arginine 253, arginine 268, glutamate 298, phenylalanine 339, arginine 415, and lysine 421.

The protein belongs to the ATP-dependent DNA ligase family. The cofactor is Mg(2+).

The enzyme catalyses ATP + (deoxyribonucleotide)n-3'-hydroxyl + 5'-phospho-(deoxyribonucleotide)m = (deoxyribonucleotide)n+m + AMP + diphosphate.. Its function is as follows. DNA ligase that seals nicks in double-stranded DNA during DNA replication, DNA recombination and DNA repair. The polypeptide is DNA ligase (Nanoarchaeum equitans (strain Kin4-M)).